The primary structure comprises 371 residues: Forkhead box protein E1 (371 aa).

The segment at 21–53 (EERGEAAAAGAGVPAEAAGRGAGGRRRKRPLQR) is disordered. The span at 26-39 (AAAAGAGVPAEAAG) shows a compositional bias: low complexity. Over residues 43-52 (GGRRRKRPLQ) the composition is skewed to basic residues. Positions 55–149 (KPPYSYIALI…ESGSFLRRRK (95 aa)) form a DNA-binding region, fork-head.

Post-translationally, phosphorylated. Expressed in Rathke pouch, in thyroid, and in the epithelium of the pharyngeal wall and arches, whereas it is absent in the epithelium of the pharyngeal pouches.

It is found in the nucleus. Its function is as follows. Transcription factor that binds consensus sites on a variety of gene promoters and activate their transcription. Involved in proper palate formation, most probably through the expression of MSX1 and TGFB3 genes which are direct targets of this transcription factor. Also implicated in thyroid gland morphogenesis. May indirectly play a role in cell growth and migration through the regulation of WNT5A expression. The polypeptide is Forkhead box protein E1 (Foxe1) (Mus musculus (Mouse)).